Here is a 224-residue protein sequence, read N- to C-terminus: Metalloproteinase inhibitor 4 (224 aa).

A signal peptide spans 1–29 (MPGSPRPAPSWVLLLRLLALLRPPGLGEA). Residue Cys-30 coordinates Zn(2+). Involved in metalloproteinase-binding stretches follow at residues 30 to 33 (CSCA) and 99 to 100 (SS). Intrachain disulfides connect Cys-30–Cys-102, Cys-32–Cys-131, Cys-42–Cys-156, Cys-158–Cys-205, Cys-163–Cys-168, and Cys-176–Cys-197. The NTR domain occupies 30–156 (CSCAPAHPQQ…SLNHHYHLNC (127 aa)).

The protein belongs to the protease inhibitor I35 (TIMP) family. In terms of tissue distribution, abundant in heart and present at low levels in many other tissues.

The protein localises to the secreted. Its function is as follows. Complexes with metalloproteinases (such as collagenases) and irreversibly inactivates them by binding to their catalytic zinc cofactor. Known to act on MMP-1, MMP-2, MMP-3, MMP-7 and MMP-9. This is Metalloproteinase inhibitor 4 (TIMP4) from Homo sapiens (Human).